The sequence spans 234 residues: Ubiquinone biosynthesis O-methyltransferase (234 aa).

S-adenosyl-L-methionine-binding residues include Arg-39, Gly-59, Asp-80, and Met-124.

It belongs to the methyltransferase superfamily. UbiG/COQ3 family.

The catalysed reaction is a 3-demethylubiquinol + S-adenosyl-L-methionine = a ubiquinol + S-adenosyl-L-homocysteine + H(+). It carries out the reaction a 3-(all-trans-polyprenyl)benzene-1,2-diol + S-adenosyl-L-methionine = a 2-methoxy-6-(all-trans-polyprenyl)phenol + S-adenosyl-L-homocysteine + H(+). It functions in the pathway cofactor biosynthesis; ubiquinone biosynthesis. In terms of biological role, O-methyltransferase that catalyzes the 2 O-methylation steps in the ubiquinone biosynthetic pathway. The chain is Ubiquinone biosynthesis O-methyltransferase from Aliivibrio fischeri (strain ATCC 700601 / ES114) (Vibrio fischeri).